We begin with the raw amino-acid sequence, 398 residues long: Cyclic GMP-AMP synthase-like receptor (398 aa).

ATP is bound by residues Ser-57 and 69 to 71; that span reads EFD. Mg(2+)-binding residues include Glu-69, Asp-71, and Asp-192. GTP is bound by residues Asp-192 and 240–247; that span reads SLSFQEQE. ATP is bound by residues 244–247, Lys-265, and 277–281; these read QEQE and SYYIK. Mn(2+) contacts are provided by Ile-288, Glu-289, and Asp-292.

The protein belongs to the mab-21 family. The cofactor is Mg(2+). Requires Mn(2+) as cofactor.

The enzyme catalyses GTP + ATP = 2',3'-cGAMP + 2 diphosphate. The catalysed reaction is GTP + ATP = pppGp(2'-5')A + diphosphate. It carries out the reaction pppGp(2'-5')A = 2',3'-cGAMP + diphosphate. With respect to regulation, the enzyme activity is specifically activated by double-stranded RNA (dsRNA). Functionally, nucleotidyltransferase that catalyzes the formation of cyclic GMP-AMP (2',3'-cGAMP) from ATP and GTP and plays a key role in innate immunity. Acts as a key sensor of double-stranded RNA (dsRNA), the presence of dsRNA in the cytoplasm being a danger signal that triggers the immune responses. Directly binds dsRNA, activating the nucleotidyltransferase activity, leading to synthesis of 2',3'-cGAMP, a second messenger that binds to and activates Sting, thereby triggering the antiviral immune response via activation of the NF-kappa-B transcription factor Rel (Relish). The protein is Cyclic GMP-AMP synthase-like receptor of Tribolium castaneum (Red flour beetle).